A 122-amino-acid chain; its full sequence is Large ribosomal subunit protein uL14 (122 aa).

The protein belongs to the universal ribosomal protein uL14 family. In terms of assembly, part of the 50S ribosomal subunit. Forms a cluster with proteins L3 and L19. In the 70S ribosome, L14 and L19 interact and together make contacts with the 16S rRNA in bridges B5 and B8.

Its function is as follows. Binds to 23S rRNA. Forms part of two intersubunit bridges in the 70S ribosome. The chain is Large ribosomal subunit protein uL14 from Bradyrhizobium sp. (strain BTAi1 / ATCC BAA-1182).